Reading from the N-terminus, the 780-residue chain is Vezatin (780 aa).

A run of 2 helical transmembrane segments spans residues Ala-140–Phe-160 and Thr-162–Ile-182. Residues Val-430–Ala-467 are a coiled coil. Disordered regions lie at residues Asp-620–Thr-718 and Gln-757–Lys-780. Positions Ser-624–Ala-643 are enriched in polar residues. 2 stretches are compositionally biased toward basic and acidic residues: residues Glu-647 to Tyr-663 and Thr-690 to Ala-699. Over residues Pro-702 to Ala-711 the composition is skewed to low complexity. The span at Phe-761–Lys-780 shows a compositional bias: acidic residues.

Belongs to the vezatin family. Interacts with USH2A (via the cytoplasmic region); the interaction associates VEZT with the USH2 complex at the stereocilia base. Interacts with myosin MYO7A and the cadherin-catenins complex. In terms of tissue distribution, expressed in developing cochlear hair cells. Isoform 1, isoform 2 and isoform 3 are expressed in testis. In the seminiferous epithelium, present exclusively in the acrosome of spermatids (at protein level).

Its subcellular location is the cell membrane. It is found in the cell projection. The protein localises to the stereocilium membrane. It localises to the cell junction. The protein resides in the adherens junction. Its subcellular location is the nucleus. It is found in the cytoplasmic vesicle. The protein localises to the secretory vesicle. It localises to the acrosome. Functionally, plays a pivotal role in the establishment of adherens junctions and their maintenance in adult life. Required for morphogenesis of the preimplantation embryo, and for the implantation process. The chain is Vezatin from Mus musculus (Mouse).